We begin with the raw amino-acid sequence, 518 residues long: Cytochrome P450 82E3 (518 aa).

Residues Val2–Trp22 traverse the membrane as a helical segment. Residue Lys254 forms a Glycyl lysine isopeptide (Lys-Gly) (interchain with G-Cter in ubiquitin) linkage. Cys458 contributes to the heme binding site.

This sequence belongs to the cytochrome P450 family. CYP82E2 subfamily. Requires heme as cofactor. Expressed at low levels in green leaves.

It localises to the membrane. It functions in the pathway alkaloid biosynthesis; nicotine biosynthesis. No nicotine N-demethylase activity. The sequence is that of Cytochrome P450 82E3 from Nicotiana tabacum (Common tobacco).